The primary structure comprises 492 residues: MTLWINGDWITGQGASRVKRNPVSGEVLWQGNDADAAQVEQACRAARAAFPRWARLSLAERQVVVERFAGLLESNKAELTAIIARETGKLRWEAATEVTAMINKIAISIKAYHVRTGEQRSEMPDGAASLRHRPHGVLAVFGPYNFPGHLPNGHIVPALLAGNTIIFKPSELTPWSGEAVMRLWQQAGLPPGVLNLVQGGRETGQALSALEDLDGLLFTGRANTGYQLHRQLSGQPEKILALEMGGNNPLIIDEVADIDAAVHLTIQSAFVTAGQRCTCARRLLLKSGAQGDAFLARLVAVSQRLTPGNWDDEPQPFIGGLISEQAAQQVVTAWQQLEAMGGRTLLAPRLLQLETSLLTPGIIEMTGVAGVPDEEVFGPLLRVWRYDSFEEAILMANNTRFGLSCGLVSPEREKFDQLLLEARAGIVNWNKPLTGAASTAPFGGIGASGNHRPSAWYAADYCAWPMASLESDSLTLPATLNPGLDFSDEVVR.

220–225 (GRANTG) serves as a coordination point for NAD(+). Catalysis depends on residues glutamate 243 and cysteine 277.

Belongs to the aldehyde dehydrogenase family. AstD subfamily.

It carries out the reaction N-succinyl-L-glutamate 5-semialdehyde + NAD(+) + H2O = N-succinyl-L-glutamate + NADH + 2 H(+). The protein operates within amino-acid degradation; L-arginine degradation via AST pathway; L-glutamate and succinate from L-arginine: step 4/5. Functionally, catalyzes the NAD-dependent reduction of succinylglutamate semialdehyde into succinylglutamate. The sequence is that of N-succinylglutamate 5-semialdehyde dehydrogenase from Shigella boydii serotype 4 (strain Sb227).